Reading from the N-terminus, the 270-residue chain is tRNA pseudouridine synthase A (270 aa).

The Nucleophile role is filled by Asp-60. The segment at 107-111 (FHARF) is RNA binding. Position 118 (Tyr-118) interacts with substrate. The segment at 168–172 (QCQSR) is interaction with tRNA.

The protein belongs to the tRNA pseudouridine synthase TruA family. As to quaternary structure, homodimer.

It carries out the reaction uridine(38/39/40) in tRNA = pseudouridine(38/39/40) in tRNA. Its function is as follows. Formation of pseudouridine at positions 38, 39 and 40 in the anticodon stem and loop of transfer RNAs. The sequence is that of tRNA pseudouridine synthase A from Escherichia coli (strain 55989 / EAEC).